A 765-amino-acid chain; its full sequence is uncharacterized protein (765 aa).

Disordered regions lie at residues 9 to 61 (NDGN…PSSV), 128 to 164 (QQQQ…NYTS), 265 to 289 (TTSS…NITT), 301 to 373 (WTTT…TYIQ), 409 to 526 (IGNN…NQSN), 540 to 560 (PTKK…KYSE), and 668 to 765 (NSNT…KSRI). Composition is skewed to low complexity over residues 40–61 (SNNI…PSSV) and 143–161 (SNKS…NNNN). 7 stretches are compositionally biased toward low complexity: residues 301–311 (WTTTKPTSSTK), 325–344 (YDSP…STSS), 353–373 (IQPT…TYIQ), 414–428 (SNHT…SLST), 438–485 (NNNN…INNN), 495–504 (DNQSSYSSPD), and 513–526 (SQQQ…NQSN). Residues 668 to 745 (NSNTDNYNYY…NNSRNNYNNN (78 aa)) show a composition bias toward low complexity.

This is an uncharacterized protein from Dictyostelium discoideum (Social amoeba).